Here is a 95-residue protein sequence, read N- to C-terminus: MTKSELIEKLATRQSQLSAKEVEAAIKEMLEQMADTLEAGDRIEIRGFGSFSLHYRAPRTGRNPKTGTSVELEGKYVPHFKPGKELRERVDAINT.

Belongs to the bacterial histone-like protein family. Heterodimer of an alpha and a beta chain.

In terms of biological role, this protein is one of the two subunits of integration host factor, a specific DNA-binding protein that functions in genetic recombination as well as in transcriptional and translational control. The protein is Integration host factor subunit beta of Shewanella halifaxensis (strain HAW-EB4).